The chain runs to 525 residues: NADH-quinone oxidoreductase subunit N (525 aa).

14 helical membrane-spanning segments follow: residues 26–46, 53–73, 90–110, 143–163, 167–187, 202–222, 246–266, 278–298, 314–334, 341–361, 368–388, 411–431, 449–469, and 487–507; these read LSPM…DAFA, VLQP…VVLL, PTLF…LLVA, VQTE…LFVA, LLVM…LCGL, YFLL…FAYG, LYLS…AAPF, PTPI…GALL, PVIW…ALTQ, LAYS…GSNI, MFYL…VSLV, LAGT…TSGF, LVVV…RVIV, and PTLT…LGVA.

This sequence belongs to the complex I subunit 2 family. NDH-1 is composed of 14 different subunits. Subunits NuoA, H, J, K, L, M, N constitute the membrane sector of the complex.

It localises to the cell membrane. It carries out the reaction a quinone + NADH + 5 H(+)(in) = a quinol + NAD(+) + 4 H(+)(out). NDH-1 shuttles electrons from NADH, via FMN and iron-sulfur (Fe-S) centers, to quinones in the respiratory chain. The immediate electron acceptor for the enzyme in this species is believed to be a menaquinone. Couples the redox reaction to proton translocation (for every two electrons transferred, four hydrogen ions are translocated across the cytoplasmic membrane), and thus conserves the redox energy in a proton gradient. The polypeptide is NADH-quinone oxidoreductase subunit N (Parafrankia sp. (strain EAN1pec)).